The chain runs to 311 residues: Mediator of RNA polymerase II transcription subunit 27-A (311 aa).

This sequence belongs to the Mediator complex subunit 27 family. In terms of assembly, component of the Mediator complex.

The protein localises to the nucleus. Its function is as follows. Component of the Mediator complex, a coactivator involved in the regulated transcription of nearly all RNA polymerase II-dependent genes. Mediator functions as a bridge to convey information from gene-specific regulatory proteins to the basal RNA polymerase II transcription machinery. Mediator is recruited to promoters by direct interactions with regulatory proteins and serves as a scaffold for the assembly of a functional preinitiation complex with RNA polymerase II and the general transcription factors. This chain is Mediator of RNA polymerase II transcription subunit 27-A (med27-a), found in Xenopus laevis (African clawed frog).